The sequence spans 446 residues: Xylose isomerase 1 (446 aa).

Active-site residues include His109 and Asp112. Mg(2+) is bound by residues Glu240, Glu276, His279, Asp304, Asp315, Asp317, and Asp347.

Belongs to the xylose isomerase family. As to quaternary structure, homotetramer. Mg(2+) serves as cofactor.

It localises to the cytoplasm. It carries out the reaction alpha-D-xylose = alpha-D-xylulofuranose. The sequence is that of Xylose isomerase 1 from Xanthomonas campestris pv. campestris (strain 8004).